The primary structure comprises 151 residues: Aspartate carbamoyltransferase regulatory chain (151 aa).

Zn(2+)-binding residues include C108, C113, C138, and C141.

It belongs to the PyrI family. As to quaternary structure, contains catalytic and regulatory chains. The cofactor is Zn(2+).

In terms of biological role, involved in allosteric regulation of aspartate carbamoyltransferase. This chain is Aspartate carbamoyltransferase regulatory chain, found in Pyrobaculum islandicum (strain DSM 4184 / JCM 9189 / GEO3).